Consider the following 299-residue polypeptide: Taste receptor type 2 member 4 (299 aa).

Over 1-9 the chain is Extracellular; that stretch reads MLRLFYFSA. Residues 10–30 traverse the membrane as a helical segment; it reads IIASVILNFVGIIMNLFITVV. Topologically, residues 31–46 are cytoplasmic; that stretch reads NCKTWVKSHRISSSDR. Residues 47–67 traverse the membrane as a helical segment; that stretch reads ILFSLGITRFLMLGLFLVNTI. Over 68-81 the chain is Extracellular; that stretch reads YFVSSNXERSVYLS. A helical membrane pass occupies residues 82 to 102; sequence AFFVLCFMFLDSSSLWFVTLL. Residues 103–131 are Cytoplasmic-facing; it reads NILYCVKITNFQHSVFLLLKRNISPKIPR. The helical transmembrane segment at 132–152 threads the bilayer; it reads LLLACVLISAFTTCLYITLSQ. At 153-172 the chain is on the extracellular side; sequence ASPFPELVTTRNNTSFNINE. Asn-164 and Asn-165 each carry an N-linked (GlcNAc...) asparagine glycan. A helical membrane pass occupies residues 173–193; it reads GILSLVVSLVLSSSLQFIINV. Over 194–230 the chain is Cytoplasmic; sequence TSASLLIHSLRRHIQKMQKNATGFWNPQTEAHVGAMK. Residues 231 to 251 traverse the membrane as a helical segment; that stretch reads LMVYFLILYIPYSVATLVQYL. Over 252-262 the chain is Extracellular; it reads PFYAGMDMGTK. The chain crosses the membrane as a helical span at residues 263–283; it reads SICLIFATLYSPGHSVLIIIT. At 284-299 the chain is on the cytoplasmic side; it reads HPKLKTTAKKILCFKK.

Belongs to the G-protein coupled receptor T2R family.

It localises to the membrane. The protein localises to the cell projection. The protein resides in the cilium membrane. Gustducin-coupled receptor implicated in the perception of bitter compounds in the oral cavity and the gastrointestinal tract. Signals through PLCB2 and the calcium-regulated cation channel TRPM5. In airway epithelial cells, binding of denatonium increases the intracellular calcium ion concentration and stimulates ciliary beat frequency. The protein is Taste receptor type 2 member 4 (TAS2R4) of Pan troglodytes (Chimpanzee).